A 463-amino-acid polypeptide reads, in one-letter code: NADH-quinone oxidoreductase subunit N (463 aa).

The next 14 membrane-spanning stretches (helical) occupy residues 2 to 22, 25 to 45, 61 to 81, 91 to 110, 114 to 133, 149 to 169, 189 to 209, 223 to 243, 264 to 284, 292 to 312, 317 to 337, 362 to 382, 395 to 415, and 434 to 454; these read NTLI…ILNF, GIVP…FYEF, FSTA…ALSH, ISDF…AMVS, LAMF…VLAA, FLMG…IYGA, IWFP…IAAV, PALT…ATLF, FTNV…IMAL, MLAF…LTIA, VLLY…SVIL, AAIL…SGFF, GYVA…GYYF, and PFLI…LGLF.

This sequence belongs to the complex I subunit 2 family. NDH-1 is composed of 14 different subunits. Subunits NuoA, H, J, K, L, M, N constitute the membrane sector of the complex.

Its subcellular location is the cell inner membrane. The enzyme catalyses a quinone + NADH + 5 H(+)(in) = a quinol + NAD(+) + 4 H(+)(out). In terms of biological role, NDH-1 shuttles electrons from NADH, via FMN and iron-sulfur (Fe-S) centers, to quinones in the respiratory chain. The immediate electron acceptor for the enzyme in this species is believed to be a menaquinone. Couples the redox reaction to proton translocation (for every two electrons transferred, four hydrogen ions are translocated across the cytoplasmic membrane), and thus conserves the redox energy in a proton gradient. This Flavobacterium johnsoniae (strain ATCC 17061 / DSM 2064 / JCM 8514 / BCRC 14874 / CCUG 350202 / NBRC 14942 / NCIMB 11054 / UW101) (Cytophaga johnsonae) protein is NADH-quinone oxidoreductase subunit N.